A 378-amino-acid polypeptide reads, in one-letter code: Stimulator of interferon genes protein (378 aa).

The Cytoplasmic portion of the chain corresponds to 1-17; the sequence is MPYSNLHPAIPRPRGHR. Residues 1-189 form a mediates interaction with ZDHHC1 and ZDHHC11 region; that stretch reads MPYSNLHPAI…MFNQLHNNML (189 aa). The chain crosses the membrane as a helical span at residues 18–34; the sequence is SKYVALIFLVASLMILW. A Glycyl lysine isopeptide (Lys-Gly) (interchain with G-Cter in ubiquitin) cross-link involves residue K19. Residues 35–44 lie on the Lumenal side of the membrane; that stretch reads VAKDPPNHTL. Residues 45–69 form a helical membrane-spanning segment; it reads KYLALHLASHELGLLLKNLCCLAEE. Residues 70 to 91 are Cytoplasmic-facing; sequence LCHVQSRYQGSYWKAVRACLGC. 2 S-palmitoyl cysteine lipidation sites follow: C88 and C91. The helical transmembrane segment at 92–106 threads the bilayer; the sequence is PIHCMAMILLSSYFY. The Lumenal segment spans residues 107 to 115; the sequence is FLQNTADIY. The chain crosses the membrane as a helical span at residues 116–133; that stretch reads LSWMFGLLVLYKSLSMLL. The Cytoplasmic segment spans residues 134–378; it reads GLQSLTPAEV…QPLPLRTDLI (245 aa). A Glycyl lysine isopeptide (Lys-Gly) (interchain with G-Cter in ubiquitin) cross-link involves residue K150. Residues 152–339 form a cyclic dinucleotide-binding domain (CBD) region; sequence LNVAHGLAWS…RHIRQEEKEE (188 aa). G165 provides a ligand contact to 3',3'-c-di-GMP. Y166 lines the 2',3'-cUAMP pocket. Y166 is a 3',3'-cGAMP binding site. A Glycyl lysine isopeptide (Lys-Gly) (interchain with G-Cter in ubiquitin) cross-link involves residue K235. A 2',3'-cUAMP-binding site is contributed by R237. Position 237 (R237) interacts with 3',3'-cGAMP. R237 is a 2',3'-cGAMP binding site. 3',3'-c-di-GMP contacts are provided by residues 237 to 240 and T262; that span reads RVYS. S240 is modified (phosphoserine). Position 262 (T262) interacts with 2',3'-cUAMP. T262 is a 2',3'-cGAMP binding site. Residue K337 forms a Glycyl lysine isopeptide (Lys-Gly) (interchain with G-Cter in SUMO) linkage. The interval 339-378 is C-terminal tail (CTT); the sequence is EVTMNAPMTSVAPPPSVLSQEPRLLISGMDQPLPLRTDLI. Residue S354 is modified to Phosphoserine; by MAP3K7. A phosphoserine; by TBK1 mark is found at S357 and S365. The pLxIS motif signature appears at 362–365; that stretch reads LLIS.

This sequence belongs to the STING family. In terms of assembly, homodimer; forms a homodimer in absence of cyclic nucleotide (c-di-GMP or cGAMP); 'Lys-63'-linked ubiquitination at Lys-150 is required for homodimerization. Homotetramer; in presence of cyclic nucleotide (c-di-GMP or cGAMP), forms tetramers and higher-order oligomers through side-by-side packing. Interacts (when phosphorylated) with IRF3; following activation and phosphorylation on the pLxIS motif by TBK1, recruits IRF3. Interacts with RIGI, MAVS and SSR2. Interacts with RNF5 and TRIM56. Interacts with TBK1; when homodimer, leading to subsequent production of IFN-beta. Interacts with IFIT1 and IFIT2. Interacts with TRIM29; this interaction induces STING1 ubiquitination and subsequent degradation. Associates with the MHC-II complex. Interacts with STEEP1; interaction takes place upon cGAMP-activation and STING1 phosphorylation by MAP3K7/TAK1 and promotes STING1 translocation to COPII vesicles. Interacts with SEC24A, SEC24B and SEC24C; promoting translocation to COPII vesicles. Interacts (when ubiquitinated) with SQSTM1; leading to relocalization to autophagosomes. Interacts with SURF4. Interacts with HNRNPA2B1. Interacts with ZDHHC1; ZDHHC1 constitutively interacts with STING1 and in presence of DNA viruses activates it by promoting its cGAMP-induced oligomerization and the recruitment of downstream signaling components. Interacts with ZDHHC11; in presence of DNA viruses promotes the recruitment of IRF3 to STING1. Interacts with TOMM70. Interacts with IFI204. Interacts with TAB1; promoting recruitment of TAB1 to the endoplasmic reticulum membrane and subsequent activation of MAP3K7/TAK1. Interacts (via transmembrane domain) with TMEM203. Interacts with DDX41. In terms of processing, phosphorylation by TBK1 leads to activation and production of IFN-beta. Following cyclic nucleotide (c-di-GMP or cGAMP)-binding, activation and translocation from the endoplasmic reticulum, STING1 is phosphorylated by TBK1 at Ser-365 in the pLxIS motif. The phosphorylated pLxIS motif constitutes an IRF3-binding motif, leading to recruitment of the transcription factor IRF3 to induce type-I interferons and other cytokines. The phosphorylated pLxIS motif facilitates SENP2 recruitment during late phase of viral infection. Phosphorylated on tyrosine residues upon MHC-II aggregation. Dephosphorylation by PPP6C leads to inactivation and decreased production of IFN-beta. Phosphorylation at Ser-357 is also required to activate IRF3. Phosphorylation at Ser-354 by MAP3K7/TAK1 facilitates its interaction with STEEP1, promoting STING1 translocation to COPII vesicles. Post-translationally, ubiquitinated. Ubiquitinated via 'Lys-63'-linked ubiquitin chains in response to double-stranded DNA treatment, leading to relocalization to autophagosomes and subsequent degradation; this process is dependent on SQSTM1. 'Lys-63'-linked ubiquitination mediated by TRIM56 at Lys-150 promotes homodimerization and recruitment of the antiviral kinase TBK1 and subsequent production of IFN-beta. 'Lys-48'-linked polyubiquitination at Lys-150 occurring after viral infection is mediated by RNF5 and leads to proteasomal degradation. 'Lys-11'-linked polyubiquitination at Lys-150 by RNF26 leads to stabilize STING1: it protects STING1 from RNF5-mediated 'Lys-48'-linked polyubiquitination. 'Lys-33'-linked and 'Lys-48'-linked deubiquitinated by USP20; leading to its stabilization and promotion of innate antiviral response. 'Lys-48'-linked deubiquitinated by USP44; leading to its stabilization and promotion of innate antiviral response. Deubiquitinated by USP13; leading to inhibition of innate antiviral response. 'Lys-63'-linked deubiquitinated by USP49; leading to inhibition of the subsequent recruitment of TBK1 to the signaling complex. 'Lys-63'-linked ubiquitination mediated by RNF39 promotes the activation of the cGAS-STING pathway. MARCHF5-mediated ubiquitination prevents the oxidation-induced polymer formation. Sumoylated at Lys-337 by TRIM38 during the early phase of viral infection, promoting its stability by preventing its relocalization to autophagosomes and subsequent degradation. Desumoylated by SENP2 during the late phase of viral infection. In terms of processing, palmitoylation takes place in the Golgi apparatus and creates a platform for the recruitment of TBK1. In terms of tissue distribution, present in spleen and thymus tissue. Also present in dendritic cells (at protein level).

It is found in the endoplasmic reticulum membrane. The protein resides in the cytoplasm. It localises to the perinuclear region. The protein localises to the endoplasmic reticulum-Golgi intermediate compartment membrane. Its subcellular location is the golgi apparatus membrane. It is found in the cytoplasmic vesicle. The protein resides in the autophagosome membrane. It localises to the mitochondrion outer membrane. The protein localises to the cell membrane. Its subcellular location is the lysosome membrane. The enzyme catalyses H(+)(in) = H(+)(out). Activated by anticancer drug 5,6-dimethylxanthenone 4-acetic acid (DMXAA). Specifically inhibited by nitrofuran derivatives C-178 and C-176, which covalently bind Cys-91 and prevent palmitoylation and subsequent activation od STING1. In terms of biological role, facilitator of innate immune signaling that acts as a sensor of cytosolic DNA from bacteria and viruses and promotes the production of type I interferon (IFN-alpha and IFN-beta). Innate immune response is triggered in response to non-CpG double-stranded DNA from viruses and bacteria delivered to the cytoplasm. Acts by binding cyclic dinucleotides: recognizes and binds cyclic di-GMP (c-di-GMP), a second messenger produced by bacteria, cyclic UMP-AMP (2',3'-cUAMP), and cyclic GMP-AMP (cGAMP), a messenger produced by CGAS in response to DNA virus in the cytosol. Upon binding to c-di-GMP, cUAMP or cGAMP, STING1 oligomerizes, translocates from the endoplasmic reticulum and is phosphorylated by TBK1 on the pLxIS motif, leading to recruitment and subsequent activation of the transcription factor IRF3 to induce expression of type I interferon and exert a potent anti-viral state. Exhibits 2',3' phosphodiester linkage-specific ligand recognition: can bind both 2'-3' linked cGAMP (2'-3'-cGAMP) and 3'-3' linked cGAMP but is preferentially activated by 2'-3' linked cGAMP. The preference for 2'-3'-cGAMP, compared to other linkage isomers is probably due to the ligand itself, whichs adopts an organized free-ligand conformation that resembles the STING1-bound conformation and pays low energy costs in changing into the active conformation. In addition to promote the production of type I interferons, plays a direct role in autophagy. Following cGAMP-binding, STING1 buds from the endoplasmic reticulum into COPII vesicles, which then form the endoplasmic reticulum-Golgi intermediate compartment (ERGIC). The ERGIC serves as the membrane source for WIPI2 recruitment and LC3 lipidation, leading to formation of autophagosomes that target cytosolic DNA or DNA viruses for degradation by the lysosome. Promotes autophagy by acting as a proton channel that directs proton efflux from the Golgi to facilitate MAP1LC3B/LC3B lipidation. The autophagy- and interferon-inducing activities can be uncoupled and autophagy induction is independent of TBK1 phosphorylation. Autophagy is also triggered upon infection by bacteria: following c-di-GMP-binding, which is produced by live Gram-positive bacteria, promotes reticulophagy. May be involved in translocon function, the translocon possibly being able to influence the induction of type I interferons. May be involved in transduction of apoptotic signals via its association with the major histocompatibility complex class II (MHC-II). In Mus musculus (Mouse), this protein is Stimulator of interferon genes protein.